The primary structure comprises 450 residues: MTINLVPLLLSLITIFTIFNPSALADQSQIRSTTSQWLHFSEDLSQSTIEVSIPTIIAAVLSFFAASISSAGGIGGGGLFLSIMTIIAGLEMKTASSFSAFMVTGVSFANVGCNLFLRNPKSRDKTLIDFDLALTIQPCLLLGVSIGVICNRMFPNWLVLFLFAVFLAWSTMKTCKKGVSYWNLESERAKIKSPRDVDGIEVARSPLLSEEREDVRQRGMIRFPWMKLGVLVIIWLLFFSINLFRGNKYGQGIISIKPCGALYWFLSSLQIPLTIFFTLCIYFSDNVQSNHTSHSNQNSEQETGVGGRQNKLMLPVMALLAGVLGGLFGIGGGMLISPLLLQIGIAPEVTAATCSFMVLFSSSMSAIQYLLLGMEHAGTAAIFALVCFVASLVGLMVVKKVIAKYGRASIIVFAVGIVMALSTVLMTTHGAFNVWNDFVSGRYMGFKLPC.

Helical transmembrane passes span 5-25 (LVPLLLSLITIFTIFNPSALA), 48-68 (TIEVSIPTIIAAVLSFFAASI), 70-90 (SAGGIGGGGLFLSIMTIIAGL), 97-117 (SFSAFMVTGVSFANVGCNLFL), 130-150 (FDLALTIQPCLLLGVSIGVIC), 153-173 (MFPNWLVLFLFAVFLAWSTMK), 223-243 (FPWMKLGVLVIIWLLFFSINL), 261-281 (ALYWFLSSLQIPLTIFFTLCI), 316-336 (VMALLAGVLGGLFGIGGGMLI), 340-360 (LLQIGIAPEVTAATCSFMVLF), 378-398 (GTAAIFALVCFVASLVGLMVV), and 408-428 (ASIIVFAVGIVMALSTVLMTT).

This sequence belongs to the 4-toluene sulfonate uptake permease (TSUP) (TC 2.A.102) family.

The protein localises to the membrane. The sequence is that of Sulfite exporter TauE/SafE family protein 1 from Arabidopsis thaliana (Mouse-ear cress).